A 407-amino-acid chain; its full sequence is Argininosuccinate synthase (407 aa).

Residues 16-24 and alanine 44 contribute to the ATP site; that span reads AYSGGLDTS. Positions 96 and 101 each coordinate L-citrulline. ATP is bound at residue glycine 126. Positions 128, 132, and 133 each coordinate L-aspartate. Position 132 (asparagine 132) interacts with L-citrulline. L-citrulline contacts are provided by arginine 136, serine 185, serine 194, glutamate 270, and tyrosine 282.

Belongs to the argininosuccinate synthase family. Type 1 subfamily. Homotetramer.

The protein localises to the cytoplasm. The enzyme catalyses L-citrulline + L-aspartate + ATP = 2-(N(omega)-L-arginino)succinate + AMP + diphosphate + H(+). Its pathway is amino-acid biosynthesis; L-arginine biosynthesis; L-arginine from L-ornithine and carbamoyl phosphate: step 2/3. The protein is Argininosuccinate synthase of Shewanella sediminis (strain HAW-EB3).